We begin with the raw amino-acid sequence, 479 residues long: Ribosomal RNA small subunit methyltransferase F (479 aa).

Residues 125-131 (AAAPGSK), Glu-149, Asp-176, and Asp-194 contribute to the S-adenosyl-L-methionine site. Cys-247 acts as the Nucleophile in catalysis.

It belongs to the class I-like SAM-binding methyltransferase superfamily. RsmB/NOP family.

It is found in the cytoplasm. The enzyme catalyses cytidine(1407) in 16S rRNA + S-adenosyl-L-methionine = 5-methylcytidine(1407) in 16S rRNA + S-adenosyl-L-homocysteine + H(+). Its function is as follows. Specifically methylates the cytosine at position 1407 (m5C1407) of 16S rRNA. In Salmonella typhi, this protein is Ribosomal RNA small subunit methyltransferase F.